Here is a 203-residue protein sequence, read N- to C-terminus: MSRKSLVFVTGNQNKLKEVVAILGDAFPWKVESKDIDLPEFQGEPDEISEEKCKIAAIKIAGPVIVEDTCLCFNAFGGLPGPYIKWFLKKLGPEGLHRMLTGWEDKTAYALCTFAYSSGKPDDPVLLFRGKTMGQIVEPRGPRNFGWDPCFQPDGFHQTYAEMASEVKNGISHRGKALQALKDHFLSLSEPDIKKAKCDEHER.

10-15 (TGNQNK) lines the ITP pocket. Glutamate 40 is a Mg(2+) binding site. Residues lysine 52, 68-69 (DT), lysine 85, 145-148 (FGWD), lysine 168, and 173-174 (HR) contribute to the ITP site.

This sequence belongs to the HAM1 NTPase family. In terms of assembly, homodimer. Mg(2+) serves as cofactor. Mn(2+) is required as a cofactor.

The protein localises to the cytoplasm. The catalysed reaction is ITP + H2O = IMP + diphosphate + H(+). It catalyses the reaction dITP + H2O = dIMP + diphosphate + H(+). It carries out the reaction XTP + H2O = XMP + diphosphate + H(+). Its function is as follows. Pyrophosphatase that hydrolyzes non-canonical purine nucleotides such as inosine triphosphate (ITP), deoxyinosine triphosphate (dITP) or xanthosine 5'-triphosphate (XTP) to their respective monophosphate derivatives. The enzyme does not distinguish between the deoxy- and ribose forms. Probably excludes non-canonical purines from RNA and DNA precursor pools, thus preventing their incorporation into RNA and DNA and avoiding chromosomal lesions. This chain is Inosine triphosphate pyrophosphatase, found in Nematostella vectensis (Starlet sea anemone).